The chain runs to 96 residues: Co-chaperonin GroES (96 aa).

Belongs to the GroES chaperonin family. In terms of assembly, heptamer of 7 subunits arranged in a ring. Interacts with the chaperonin GroEL.

The protein localises to the cytoplasm. In terms of biological role, together with the chaperonin GroEL, plays an essential role in assisting protein folding. The GroEL-GroES system forms a nano-cage that allows encapsulation of the non-native substrate proteins and provides a physical environment optimized to promote and accelerate protein folding. GroES binds to the apical surface of the GroEL ring, thereby capping the opening of the GroEL channel. The sequence is that of Co-chaperonin GroES from Geobacter sp. (strain M21).